Consider the following 432-residue polypeptide: Adenosine 3'-phospho 5'-phosphosulfate transporter 1 (432 aa).

9 helical membrane passes run 5 to 25, 40 to 60, 109 to 129, 154 to 174, 238 to 258, 265 to 285, 299 to 319, 353 to 373, and 387 to 407; these read WWAV…ETPE, VVNA…VQYF, ALKL…WGVL, FLVL…CVLC, WEYL…LSSG, PATT…DSFT, SVQM…GSLL, LFIF…IMTL, and GHTV…ALLL. S427 is subject to Phosphoserine.

Belongs to the nucleotide-sugar transporter family. SLC35B subfamily.

The protein localises to the golgi apparatus membrane. It carries out the reaction 3'-phosphoadenylyl sulfate(in) + adenosine 3',5'-bisphosphate(out) = 3'-phosphoadenylyl sulfate(out) + adenosine 3',5'-bisphosphate(in). Its function is as follows. Probably functions as a 3'-phosphoadenylyl sulfate:adenosine 3',5'-bisphosphate antiporter at the Golgi membranes. Mediates the transport from the cytosol into the lumen of the Golgi of 3'-phosphoadenylyl sulfate/adenosine 3'-phospho 5'-phosphosulfate (PAPS), a universal sulfuryl donor for sulfation events that take place in that compartment. This chain is Adenosine 3'-phospho 5'-phosphosulfate transporter 1, found in Pongo abelii (Sumatran orangutan).